The primary structure comprises 131 residues: Small ribosomal subunit protein uS11 (131 aa).

It belongs to the universal ribosomal protein uS11 family. As to quaternary structure, part of the 30S ribosomal subunit. Interacts with proteins S7 and S18. Binds to IF-3.

Functionally, located on the platform of the 30S subunit, it bridges several disparate RNA helices of the 16S rRNA. Forms part of the Shine-Dalgarno cleft in the 70S ribosome. The chain is Small ribosomal subunit protein uS11 from Clostridium acetobutylicum (strain ATCC 824 / DSM 792 / JCM 1419 / IAM 19013 / LMG 5710 / NBRC 13948 / NRRL B-527 / VKM B-1787 / 2291 / W).